The primary structure comprises 316 residues: Pantothenate kinase (316 aa).

ATP is bound at residue 95-102 (GSVAVGKS).

The protein belongs to the prokaryotic pantothenate kinase family.

It localises to the cytoplasm. The enzyme catalyses (R)-pantothenate + ATP = (R)-4'-phosphopantothenate + ADP + H(+). It functions in the pathway cofactor biosynthesis; coenzyme A biosynthesis; CoA from (R)-pantothenate: step 1/5. This chain is Pantothenate kinase, found in Photorhabdus laumondii subsp. laumondii (strain DSM 15139 / CIP 105565 / TT01) (Photorhabdus luminescens subsp. laumondii).